The sequence spans 552 residues: Urocanate hydratase (552 aa).

NAD(+) contacts are provided by residues 49–50, Gln127, 173–175, Asp193, 239–240, 260–264, 270–271, and Tyr319; these read GG, GMG, NA, QTSAH, and YI. The active site involves Cys407. Gly489 contacts NAD(+).

Belongs to the urocanase family. NAD(+) serves as cofactor.

It is found in the cytoplasm. It carries out the reaction 4-imidazolone-5-propanoate = trans-urocanate + H2O. Its pathway is amino-acid degradation; L-histidine degradation into L-glutamate; N-formimidoyl-L-glutamate from L-histidine: step 2/3. Catalyzes the conversion of urocanate to 4-imidazolone-5-propionate. The chain is Urocanate hydratase from Bacillus cereus (strain G9842).